We begin with the raw amino-acid sequence, 428 residues long: tRNA modification GTPase MnmE (428 aa).

Arg20, Glu76, and Arg116 together coordinate (6S)-5-formyl-5,6,7,8-tetrahydrofolate. A TrmE-type G domain is found at 212–351 (GFEVAIIGAP…LVEALQDRLL (140 aa)). K(+) is bound at residue Asn222. Residues 222-227 (NAGKST), 241-247 (SEVAGTT), and 266-269 (DTAG) contribute to the GTP site. Mg(2+) is bound at residue Ser226. Residues Ser241, Val243, and Thr246 each contribute to the K(+) site. A Mg(2+)-binding site is contributed by Thr247. Residue Lys428 participates in (6S)-5-formyl-5,6,7,8-tetrahydrofolate binding.

Belongs to the TRAFAC class TrmE-Era-EngA-EngB-Septin-like GTPase superfamily. TrmE GTPase family. Homodimer. Heterotetramer of two MnmE and two MnmG subunits. K(+) serves as cofactor.

The protein localises to the cytoplasm. Functionally, exhibits a very high intrinsic GTPase hydrolysis rate. Involved in the addition of a carboxymethylaminomethyl (cmnm) group at the wobble position (U34) of certain tRNAs, forming tRNA-cmnm(5)s(2)U34. This Cereibacter sphaeroides (strain ATCC 17025 / ATH 2.4.3) (Rhodobacter sphaeroides) protein is tRNA modification GTPase MnmE.